Here is an 892-residue protein sequence, read N- to C-terminus: Protein argonaute 11 (892 aa).

The span at 1-17 shows a compositional bias: gly residues; it reads MSSRGGGVGGRRGGPGG. Disordered regions lie at residues 1-68 and 86-117; these read MSSR…ALQP and MEAREGASSSSSASAPAVGEVEPPSRAVGALP. The segment covering 86–107 has biased composition (low complexity); that stretch reads MEAREGASSSSSASAPAVGEVE. The PAZ domain occupies 248–362; sequence SLKQFLAGTY…LPMEVCRIVK (115 aa). The Piwi domain maps to 541-848; it reads LLVIVLPDAN…AASRARHYLE (308 aa). Residues 850-876 form a disordered region; sequence GSLPDHGSSSASAAGGSRRNDRGVPVK. The span at 856–866 shows a compositional bias: low complexity; sequence GSSSASAAGGS. A compositionally biased stretch (basic and acidic residues) spans 867 to 876; that stretch reads RRNDRGVPVK.

Belongs to the argonaute family. Ago subfamily.

Functionally, probably involved in the RNA silencing pathway. May bind to short RNAs such as microRNAs (miRNAs) or short interfering RNAs (siRNAs), and represses the translation of mRNAs which are complementary to them. This is Protein argonaute 11 (AGO11) from Oryza sativa subsp. japonica (Rice).